The chain runs to 43 residues: Protein PsbN (43 aa).

A helical membrane pass occupies residues 5 to 27 (TLIAISISGLLVSFTGYALYTAF).

This sequence belongs to the PsbN family.

The protein resides in the plastid. The protein localises to the chloroplast thylakoid membrane. May play a role in photosystem I and II biogenesis. This chain is Protein PsbN, found in Phaseolus vulgaris (Kidney bean).